A 518-amino-acid polypeptide reads, in one-letter code: Integrator complex subunit 14 (518 aa).

One can recognise a VWFA domain in the interval 2–204; it reads PTVVVMDVSL…KNVQSMFGKL (203 aa). Residues Ser10, Ser12, and Thr86 each contribute to the Mg(2+) site. An N6-acetyllysine modification is found at Lys418.

The protein belongs to the Integrator subunit 14 family. As to quaternary structure, component of the Integrator complex, composed of core subunits INTS1, INTS2, INTS3, INTS4, INTS5, INTS6, INTS7, INTS8, INTS9/RC74, INTS10, INTS11/CPSF3L, INTS12, INTS13, INTS14 and INTS15. The core complex associates with protein phosphatase 2A subunits PPP2CA and PPP2R1A, to form the Integrator-PP2A (INTAC) complex. INTS14 is part of the tail subcomplex, composed of INTS10, INTS13, INTS14 and INTS15.

The protein resides in the nucleus. In terms of biological role, component of the integrator complex, a multiprotein complex that terminates RNA polymerase II (Pol II) transcription in the promoter-proximal region of genes. The integrator complex provides a quality checkpoint during transcription elongation by driving premature transcription termination of transcripts that are unfavorably configured for transcriptional elongation: the complex terminates transcription by (1) catalyzing dephosphorylation of the C-terminal domain (CTD) of Pol II subunit POLR2A/RPB1 and SUPT5H/SPT5, (2) degrading the exiting nascent RNA transcript via endonuclease activity and (3) promoting the release of Pol II from bound DNA. The integrator complex is also involved in terminating the synthesis of non-coding Pol II transcripts, such as enhancer RNAs (eRNAs), small nuclear RNAs (snRNAs), telomerase RNAs and long non-coding RNAs (lncRNAs). Within the integrator complex, INTS14 is part of the integrator tail module that acts as a platform for the recruitment of transcription factors at promoters. In Bos taurus (Bovine), this protein is Integrator complex subunit 14.